A 281-amino-acid chain; its full sequence is Endochitinase At2g43610 (281 aa).

A signal peptide spans 1–28 (MATQNAILKKALIIFLFTLTIMTGTAFS). In terms of domain architecture, Chitin-binding type-1 spans 29 to 66 (QNCGTNGCKGNMCCSRWGYCGTTKAYCGTGCQSGPCNS). Cystine bridges form between cysteine 31–cysteine 42, cysteine 36–cysteine 48, cysteine 41–cysteine 55, and cysteine 59–cysteine 64. Residues 86–281 (GTIASVITPA…GVTPGTNLSC (196 aa)) are catalytic. Catalysis depends on glutamate 148, which acts as the Proton donor. Residue asparagine 278 is glycosylated (N-linked (GlcNAc...) asparagine).

The protein belongs to the glycosyl hydrolase 19 family. Chitinase class I subfamily.

It carries out the reaction Random endo-hydrolysis of N-acetyl-beta-D-glucosaminide (1-&gt;4)-beta-linkages in chitin and chitodextrins.. The chain is Endochitinase At2g43610 from Arabidopsis thaliana (Mouse-ear cress).